Consider the following 298-residue polypeptide: Protein DR_1172 (298 aa).

LEA-like repeat units lie at residues 48–117 (DAAQ…NVGQ), 128–197 (DQAK…DVAQ), and 201–270 (QGAQ…AGKQ). A compositionally biased stretch (basic and acidic residues) spans 174–193 (VQDVKADASKAADQAKDKAQ). A disordered region spans residues 174-298 (VQDVKADASK…MTGNTNTRKN (125 aa)). Residues 194 to 208 (DVAQNVKQGAQQAAS) are compositionally biased toward low complexity. Over residues 209 to 233 (DAKDKVQDVKADASRAADQAKDKAQ) the composition is skewed to basic and acidic residues. Low complexity predominate over residues 275–298 (GSTTNNAGTAGNTGMTGNTNTRKN).

It belongs to the LEA type 1 family.

The sequence is that of Protein DR_1172 from Deinococcus radiodurans (strain ATCC 13939 / DSM 20539 / JCM 16871 / CCUG 27074 / LMG 4051 / NBRC 15346 / NCIMB 9279 / VKM B-1422 / R1).